A 418-amino-acid polypeptide reads, in one-letter code: Vasopressin V1a receptor (418 aa).

The tract at residues 1-43 is disordered; sequence MRLSAGPDAGPSGNSSPWWPLATGAGNTSREAEALGEGNGPPR. Residues 1–52 are Extracellular-facing; the sequence is MRLSAGPDAGPSGNSSPWWPLATGAGNTSREAEALGEGNGPPRDVRNEELAK. N27 is a glycosylation site (N-linked (GlcNAc...) asparagine). A helical membrane pass occupies residues 53-76; it reads LEIAVLAVTFAVAVLGNSSVLLAL. Topologically, residues 77–88 are cytoplasmic; that stretch reads HRTPRKTSRMHL. The chain crosses the membrane as a helical span at residues 89-110; the sequence is FIRHLSLADLAVAFFQVLPQMC. Over 111 to 125 the chain is Extracellular; that stretch reads WDITYRFRGPDWLCR. C124 and C203 are oxidised to a cystine. A helical membrane pass occupies residues 126–147; sequence VVKHLQVFGMFASAYMLVVMTA. Over 148 to 168 the chain is Cytoplasmic; that stretch reads DRYIAVCHPLKTLQQPARRSR. A helical transmembrane segment spans residues 169 to 190; that stretch reads LMIAAAWVLSFVLSTPQYFVFS. The Extracellular segment spans residues 191 to 218; sequence MIEVNNVTKARDCWATFIQPWGSRAYVT. N-linked (GlcNAc...) asparagine glycosylation is present at N196. A helical membrane pass occupies residues 219-239; it reads WMTGGIFVAPVVILGTCYGFI. Over 240–293 the chain is Cytoplasmic; it reads CYNIWCNVRGKTASRQSKGAEQAGVAFQKGFLLAPCVSSVKSISRAKIRTVKMT. A helical membrane pass occupies residues 294-313; the sequence is FVIVTAYIVCWAPFFIIQMW. Topologically, residues 314-331 are extracellular; that stretch reads SVWDPMSVWTESENPTIT. Residues 332 to 351 traverse the membrane as a helical segment; it reads ITALLGSLNSCCNPWIYMFF. Over 352-418 the chain is Cytoplasmic; the sequence is SGHLLQDCVQ…KSIKFIPVST (67 aa). S-palmitoyl cysteine attachment occurs at residues C365 and C366. Residues 377-410 form a disordered region; that stretch reads DTDSMSRRQTFYSNNRSPTNSTGMWKDSPKSSKS. The segment covering 383 to 399 has biased composition (polar residues); it reads RRQTFYSNNRSPTNSTG. S404 is modified (phosphoserine).

This sequence belongs to the G-protein coupled receptor 1 family. Vasopressin/oxytocin receptor subfamily.

Its subcellular location is the cell membrane. Functionally, receptor for arginine vasopressin. The activity of this receptor is mediated by G proteins which activate a phosphatidyl-inositol-calcium second messenger system. Has been involved in social behaviors, including affiliation and attachment. This Homo sapiens (Human) protein is Vasopressin V1a receptor (AVPR1A).